A 476-amino-acid polypeptide reads, in one-letter code: Bifunctional protein HldE (476 aa).

The interval 1–319 (MKLTLPDYDQ…EAIYGSQDSG (319 aa)) is ribokinase. 195–198 (NLSE) serves as a coordination point for ATP. D264 is a catalytic residue. Positions 344-476 (MTNGCFDILH…IIEAIRGGKG (133 aa)) are cytidylyltransferase.

This sequence in the N-terminal section; belongs to the carbohydrate kinase PfkB family. The protein in the C-terminal section; belongs to the cytidylyltransferase family. As to quaternary structure, homodimer.

It catalyses the reaction D-glycero-beta-D-manno-heptose 7-phosphate + ATP = D-glycero-beta-D-manno-heptose 1,7-bisphosphate + ADP + H(+). It carries out the reaction D-glycero-beta-D-manno-heptose 1-phosphate + ATP + H(+) = ADP-D-glycero-beta-D-manno-heptose + diphosphate. The protein operates within nucleotide-sugar biosynthesis; ADP-L-glycero-beta-D-manno-heptose biosynthesis; ADP-L-glycero-beta-D-manno-heptose from D-glycero-beta-D-manno-heptose 7-phosphate: step 1/4. Its pathway is nucleotide-sugar biosynthesis; ADP-L-glycero-beta-D-manno-heptose biosynthesis; ADP-L-glycero-beta-D-manno-heptose from D-glycero-beta-D-manno-heptose 7-phosphate: step 3/4. Catalyzes the phosphorylation of D-glycero-D-manno-heptose 7-phosphate at the C-1 position to selectively form D-glycero-beta-D-manno-heptose-1,7-bisphosphate. In terms of biological role, catalyzes the ADP transfer from ATP to D-glycero-beta-D-manno-heptose 1-phosphate, yielding ADP-D-glycero-beta-D-manno-heptose. This Photobacterium profundum (strain SS9) protein is Bifunctional protein HldE.